The chain runs to 403 residues: Phosphoglycerate kinase (403 aa).

Substrate-binding positions include 21–23 (DFN), arginine 36, 59–62 (HLGR), arginine 119, and arginine 159. Residues lysine 214, glycine 301, glutamate 332, and 359–362 (GGDS) contribute to the ATP site.

It belongs to the phosphoglycerate kinase family. In terms of assembly, monomer.

The protein localises to the cytoplasm. It catalyses the reaction (2R)-3-phosphoglycerate + ATP = (2R)-3-phospho-glyceroyl phosphate + ADP. It functions in the pathway carbohydrate degradation; glycolysis; pyruvate from D-glyceraldehyde 3-phosphate: step 2/5. The polypeptide is Phosphoglycerate kinase (Lactobacillus gasseri (strain ATCC 33323 / DSM 20243 / BCRC 14619 / CIP 102991 / JCM 1131 / KCTC 3163 / NCIMB 11718 / NCTC 13722 / AM63)).